The sequence spans 178 residues: ATP synthase subunit d, mitochondrial (178 aa).

Positions 149 to 178 (NKPTFWPHTPEEQVGYKSKEQLEAEAQGHH) are disordered. Residues 165 to 178 (KSKEQLEAEAQGHH) show a composition bias toward basic and acidic residues.

Belongs to the ATPase d subunit family. F-type ATPases have 2 components, CF(1) - the catalytic core - and CF(0) - the membrane proton channel. CF(0) seems to have nine subunits: a, b, c, d, e, f, g, F6 and 8 (or A6L).

Its subcellular location is the mitochondrion. It is found in the mitochondrion inner membrane. Functionally, mitochondrial membrane ATP synthase (F(1)F(0) ATP synthase or Complex V) produces ATP from ADP in the presence of a proton gradient across the membrane which is generated by electron transport complexes of the respiratory chain. F-type ATPases consist of two structural domains, F(1) - containing the extramembraneous catalytic core, and F(0) - containing the membrane proton channel, linked together by a central stalk and a peripheral stalk. During catalysis, ATP synthesis in the catalytic domain of F(1) is coupled via a rotary mechanism of the central stalk subunits to proton translocation. Part of the complex F(0) domain and the peripheric stalk, which acts as a stator to hold the catalytic alpha(3)beta(3) subcomplex and subunit a/ATP6 static relative to the rotary elements. This chain is ATP synthase subunit d, mitochondrial, found in Drosophila melanogaster (Fruit fly).